The primary structure comprises 396 residues: Elongation factor Tu 1 (396 aa).

The region spanning 10–206 is the tr-type G domain; that stretch reads KPHVNVGTIG…ALDTYIPTPE (197 aa). Residues 19 to 26 form a G1 region; sequence GHVDHGKT. Residue 19–26 participates in GTP binding; that stretch reads GHVDHGKT. T26 provides a ligand contact to Mg(2+). The segment at 60 to 64 is G2; sequence GITIN. A G3 region spans residues 81–84; sequence DCPG. Residues 81–85 and 136–139 contribute to the GTP site; these read DCPGH and NKAD. The G4 stretch occupies residues 136 to 139; sequence NKAD. Residues 174–176 are G5; that stretch reads SAK.

Belongs to the TRAFAC class translation factor GTPase superfamily. Classic translation factor GTPase family. EF-Tu/EF-1A subfamily. As to quaternary structure, monomer.

Its subcellular location is the cytoplasm. The catalysed reaction is GTP + H2O = GDP + phosphate + H(+). Its function is as follows. GTP hydrolase that promotes the GTP-dependent binding of aminoacyl-tRNA to the A-site of ribosomes during protein biosynthesis. The protein is Elongation factor Tu 1 of Methylobacillus flagellatus (strain ATCC 51484 / DSM 6875 / VKM B-1610 / KT).